The primary structure comprises 211 residues: tRNA (guanine-N(7)-)-methyltransferase (211 aa).

Residues Glu44, Asp69, Asp96, and Asp118 each coordinate S-adenosyl-L-methionine. Residue Asp118 is part of the active site. Residue Lys122 participates in substrate binding. The tract at residues 124 to 129 (RHEKRR) is interaction with RNA. Residues Asp154 and 191 to 194 (TEYE) contribute to the substrate site.

This sequence belongs to the class I-like SAM-binding methyltransferase superfamily. TrmB family.

It catalyses the reaction guanosine(46) in tRNA + S-adenosyl-L-methionine = N(7)-methylguanosine(46) in tRNA + S-adenosyl-L-homocysteine. It participates in tRNA modification; N(7)-methylguanine-tRNA biosynthesis. Catalyzes the formation of N(7)-methylguanine at position 46 (m7G46) in tRNA. The polypeptide is tRNA (guanine-N(7)-)-methyltransferase (Streptococcus pneumoniae (strain Taiwan19F-14)).